The following is a 427-amino-acid chain: Glutamate-1-semialdehyde 2,1-aminomutase (427 aa).

Lys-268 bears the N6-(pyridoxal phosphate)lysine mark.

Belongs to the class-III pyridoxal-phosphate-dependent aminotransferase family. HemL subfamily. It depends on pyridoxal 5'-phosphate as a cofactor.

The protein localises to the cytoplasm. It catalyses the reaction (S)-4-amino-5-oxopentanoate = 5-aminolevulinate. Its pathway is porphyrin-containing compound metabolism; protoporphyrin-IX biosynthesis; 5-aminolevulinate from L-glutamyl-tRNA(Glu): step 2/2. The protein is Glutamate-1-semialdehyde 2,1-aminomutase of Methanococcus maripaludis (strain C5 / ATCC BAA-1333).